The following is a 270-amino-acid chain: Phosphatidylglycerol--prolipoprotein diacylglyceryl transferase (270 aa).

Helical transmembrane passes span 14–34, 60–80, 103–123, 133–153, 181–201, 209–229, and 235–255; these read VAFT…ILAL, YFFW…IAIY, FVGI…LATI, LWQL…FGRI, PSQL…LFFY, GELI…CEFF, and GIGF…LMFF. Arg-152 lines the a 1,2-diacyl-sn-glycero-3-phospho-(1'-sn-glycerol) pocket.

This sequence belongs to the Lgt family.

It is found in the cell inner membrane. The enzyme catalyses L-cysteinyl-[prolipoprotein] + a 1,2-diacyl-sn-glycero-3-phospho-(1'-sn-glycerol) = an S-1,2-diacyl-sn-glyceryl-L-cysteinyl-[prolipoprotein] + sn-glycerol 1-phosphate + H(+). It participates in protein modification; lipoprotein biosynthesis (diacylglyceryl transfer). Functionally, catalyzes the transfer of the diacylglyceryl group from phosphatidylglycerol to the sulfhydryl group of the N-terminal cysteine of a prolipoprotein, the first step in the formation of mature lipoproteins. This Campylobacter curvus (strain 525.92) protein is Phosphatidylglycerol--prolipoprotein diacylglyceryl transferase.